The chain runs to 350 residues: MAATSLMSALAARLLQPAHSCSLRLRPFHLAAVRNEAVVISGRKLAQQIKQEVRQEVEEWVASGNKRPHLSVILVGENPASHSYVLNKTRAAAVVGINSETIMKPASISEEELLNLINKLNNDDNVDGLLVQLPLPEHIDERRICNAVSPDKDVDGFHVINVGRMCLDQYSMLPATPWGVWEIIKRTGIPTLGKNVVVAGRSKNVGMPIAMLLHTDGAHERPGGDATVTISHRYTPKEQLKKHTILADIVISAAGIPNLITADMIKEGAAVIDVGINRVHDPVTAKPKLVGDVDFEGVRQKAGYITPVPGGVGPMTVAMLMKNTIIAAKKVLRLEEREVLKSKELGVATN.

A mitochondrion-targeting transit peptide spans 1–35 (MAATSLMSALAARLLQPAHSCSLRLRPFHLAAVRN). Position 50 is an N6-acetyllysine; alternate (Lys-50). Residue Lys-50 forms a Glycyl lysine isopeptide (Lys-Gly) (interchain with G-Cter in SUMO2); alternate linkage. Residues 84–88 (YVLNK) and 131–133 (VQL) each bind substrate. NAD(+) contacts are provided by residues 200 to 202 (GRS) and Arg-233. A substrate-binding site is contributed by 309-313 (PGGVG).

The protein belongs to the tetrahydrofolate dehydrogenase/cyclohydrolase family. In terms of assembly, homodimer. It depends on Mg(2+) as a cofactor.

It localises to the mitochondrion. The catalysed reaction is (6R)-5,10-methylene-5,6,7,8-tetrahydrofolate + NAD(+) = (6R)-5,10-methenyltetrahydrofolate + NADH. It carries out the reaction (6R)-5,10-methenyltetrahydrofolate + H2O = (6R)-10-formyltetrahydrofolate + H(+). Although its dehydrogenase activity is NAD-specific, it can also utilize NADP at a reduced efficiency. The sequence is that of Bifunctional methylenetetrahydrofolate dehydrogenase/cyclohydrolase, mitochondrial (MTHFD2) from Homo sapiens (Human).